The following is a 314-amino-acid chain: Melanoma-associated antigen 6 (314 aa).

The segment covering 1 to 20 (MPLEQRSQHCKPEEGLEARG) has biased composition (basic and acidic residues). The tract at residues 1–99 (MPLEQRSQHC…QEEEGPSTFP (99 aa)) is disordered. Residues 21 to 44 (EALGLVGAQAPATEEQEAASSSST) are compositionally biased toward low complexity. A compositionally biased stretch (polar residues) spans 65 to 87 (PQGASSLPTTMNYPLWSQSYEDS). Positions 109–308 (LSRKVAKLVH…ISYPLLHEWA (200 aa)) constitute an MAGE domain.

Interacts with TRIM28. In terms of processing, ubiquitinated by the DCX(DCAF12) complex specifically recognizes the diglutamate (Glu-Glu) at the C-terminus, leading to its degradation. In terms of tissue distribution, expressed in many tumors of several types, such as melanoma, head and neck squamous cell carcinoma, lung carcinoma and breast carcinoma, but not in normal tissues except for testes.

Activator of ubiquitin ligase activity of RING-type zinc finger-containing E3 ubiquitin-protein ligases that acts as a repressor of autophagy. May enhance ubiquitin ligase activity of TRIM28 and stimulate p53/TP53 ubiquitination by TRIM28. Proposed to act through recruitment and/or stabilization of the Ubl-conjugating enzyme (E2) at the E3:substrate complex. May play a role in tumor transformation or aspects of tumor progression. In vitro promotes cell viability in melanoma cell lines. The polypeptide is Melanoma-associated antigen 6 (Homo sapiens (Human)).